The chain runs to 60 residues: Anionic antimicrobial peptide 2 (60 aa).

As to expression, hemolymph.

Its subcellular location is the secreted. Antimicrobial protein. Has antibacterial activity against the Gram-positive bacteria M.luteus (MIC=86.6 uM), L.monocytogenes (MIC=86.6 uM), and S.lutea (MIC=86.6 uM). Lacks antibacterial activity against the Gram-positive bacteria B.circulans and S.aureus, and the Gram-negative bacteria E.coli D31, E.coli ATCC 25922, and S.typhimurium. Has antifungal activity against P.pastoris (MIC=86.6 uM) and P.stipitis (MIC=90.9 uM), but lacks antifungal activity against A.niger, C.albicans, C.albidus, C.fructus, C.wickerhamii, F.oxysporum, S.cerevisiae, S.pombe, T.harzianum, and Z.marxianus. The chain is Anionic antimicrobial peptide 2 from Galleria mellonella (Greater wax moth).